The following is a 356-amino-acid chain: Protein pelota homolog (356 aa).

This sequence belongs to the eukaryotic release factor 1 family. Pelota subfamily. As to quaternary structure, monomer. Requires a divalent metal cation as cofactor.

It is found in the cytoplasm. May function in recognizing stalled ribosomes, interact with stem-loop structures in stalled mRNA molecules, and effect endonucleolytic cleavage of the mRNA. May play a role in the release non-functional ribosomes and degradation of damaged mRNAs. Has endoribonuclease activity. The chain is Protein pelota homolog from Pyrococcus furiosus (strain ATCC 43587 / DSM 3638 / JCM 8422 / Vc1).